The primary structure comprises 1075 residues: DNA-directed RNA polymerase subunit beta (1075 aa).

The protein belongs to the RNA polymerase beta chain family. As to quaternary structure, in plastids the minimal PEP RNA polymerase catalytic core is composed of four subunits: alpha, beta, beta', and beta''. When a (nuclear-encoded) sigma factor is associated with the core the holoenzyme is formed, which can initiate transcription.

It is found in the plastid. The protein localises to the chloroplast. The enzyme catalyses RNA(n) + a ribonucleoside 5'-triphosphate = RNA(n+1) + diphosphate. In terms of biological role, DNA-dependent RNA polymerase catalyzes the transcription of DNA into RNA using the four ribonucleoside triphosphates as substrates. This is DNA-directed RNA polymerase subunit beta from Oryza sativa (Rice).